The primary structure comprises 75 residues: Cytochrome c oxidase subunit 6C (75 aa).

The Mitochondrial matrix portion of the chain corresponds to Met1–Gly13. Residues Leu14–Arg54 traverse the membrane as a helical segment. The Mitochondrial intermembrane segment spans residues Asn55–Lys75.

It belongs to the cytochrome c oxidase subunit 6c family. As to quaternary structure, component of the cytochrome c oxidase (complex IV, CIV), a multisubunit enzyme composed of 14 subunits. The complex is composed of a catalytic core of 3 subunits MT-CO1, MT-CO2 and MT-CO3, encoded in the mitochondrial DNA, and 11 supernumerary subunits COX4I1 (or COX4I2), COX5A, COX5B, COX6A1 (or COX6A2), COX6B1 (or COX6B2), COX6C, COX7A2 (or COX7A1), COX7B, COX7C, COX8A and NDUFA4, which are encoded in the nuclear genome. The complex exists as a monomer or a dimer and forms supercomplexes (SCs) in the inner mitochondrial membrane with NADH-ubiquinone oxidoreductase (complex I, CI) and ubiquinol-cytochrome c oxidoreductase (cytochrome b-c1 complex, complex III, CIII), resulting in different assemblies (supercomplex SCI(1)III(2)IV(1) and megacomplex MCI(2)III(2)IV(2)).

It is found in the mitochondrion inner membrane. Its pathway is energy metabolism; oxidative phosphorylation. Component of the cytochrome c oxidase, the last enzyme in the mitochondrial electron transport chain which drives oxidative phosphorylation. The respiratory chain contains 3 multisubunit complexes succinate dehydrogenase (complex II, CII), ubiquinol-cytochrome c oxidoreductase (cytochrome b-c1 complex, complex III, CIII) and cytochrome c oxidase (complex IV, CIV), that cooperate to transfer electrons derived from NADH and succinate to molecular oxygen, creating an electrochemical gradient over the inner membrane that drives transmembrane transport and the ATP synthase. Cytochrome c oxidase is the component of the respiratory chain that catalyzes the reduction of oxygen to water. Electrons originating from reduced cytochrome c in the intermembrane space (IMS) are transferred via the dinuclear copper A center (CU(A)) of subunit 2 and heme A of subunit 1 to the active site in subunit 1, a binuclear center (BNC) formed by heme A3 and copper B (CU(B)). The BNC reduces molecular oxygen to 2 water molecules using 4 electrons from cytochrome c in the IMS and 4 protons from the mitochondrial matrix. The protein is Cytochrome c oxidase subunit 6C (COX6C) of Homo sapiens (Human).